A 381-amino-acid chain; its full sequence is RxLR effector protein 54 (381 aa).

An N-terminal signal peptide occupies residues 1–19; that stretch reads MRFQSIMMLTITCAGTCLA. The RxLR-dEER motif lies at 57 to 75; sequence RFLRFDTVARDTAGNDEER. WY-domain stretches follow at residues 97 to 150, 151 to 198, 199 to 247, 251 to 299, and 302 to 354; these read SAEE…ANNG, NQAF…SLSG, NWIR…WNKN, FFGD…LLTS, and SHKT…RDKI. Residues 372–381 carry the ATG8 interacting motif motif; that stretch reads KPLDFDWEIV.

Belongs to the RxLR effector family. In terms of assembly, interacts via its C-terminal AIM with host ATG8CL.

The protein localises to the secreted. The protein resides in the host nucleus. Its subcellular location is the host cytoplasm. Its function is as follows. Effector that specifically binds host autophagy protein ATG8CL of the ATG8 family to stimulate autophagosome formation and subsequent autophagy rather than blocking autophagic flux. The pathogen remodels host-microbe interface by co-opting the host autophagy machinery which plays a key role in plant immunity. PexRD54 competes with the autophagy cargo receptor Joka2 to deplete it out of ATG8CL complexes and interferes with Joka2's positive effect on pathogen defense. This chain is RxLR effector protein 54, found in Phytophthora infestans (strain T30-4) (Potato late blight agent).